The primary structure comprises 579 residues: Glypican-2 (579 aa).

Positions Met-1–Gly-21 are cleaved as a signal peptide. O-linked (Xyl...) (heparan sulfate) serine glycosylation is found at Ser-55, Ser-92, and Ser-155. 2 disordered regions span residues Gly-347 to Ala-382 and Ala-483 to Arg-552. Residues Ala-361 to Pro-379 are compositionally biased toward basic and acidic residues. O-linked (Xyl...) (heparan sulfate) serine glycans are attached at residues Ser-498 and Ser-500. Pro residues predominate over residues Val-517–Pro-527. The GPI-anchor amidated serine moiety is linked to residue Ser-556. The propeptide at Ser-557 to Arg-579 is removed in mature form.

It belongs to the glypican family. Interacts (via heparan sulfate) with PTN; this interaction promotes neurite outgrowth through binding of PTN with chondroitin sulfate of proteoglycans, thereby releasing PTPRS of chondroitin sulfate proteoglycans (CSPGs) and leading to binding with heparan sulfate of GPC2. Interacts (heparan sulfate chain) with MDK; this interaction is inhibited by heparin followed by chondroitin sulfate E; this interaction induces GPC2 clustering through heparan sulfate chain; this interaction induces neuronal cell adhesion and neurite outgrowth.

The protein resides in the cell membrane. Its subcellular location is the secreted. It is found in the extracellular space. Functionally, cell surface proteoglycan that bears heparan sulfate. May fulfill a function related to the motile behaviors of developing neurons. In Mus musculus (Mouse), this protein is Glypican-2 (Gpc2).